The primary structure comprises 1104 residues: Protein KIBRA (1104 aa).

WW domains are found at residues Leu-6–Asp-39 and Asp-53–Val-86. A coiled-coil region spans residues Leu-107–Gln-193. Ser-141 carries the phosphoserine modification. 2 disordered regions span residues Ser-429–Leu-449 and Thr-509–Cys-547. Low complexity predominate over residues Thr-527–Ser-542. The residue at position 535 (Ser-535) is a Phosphoserine. Ser-542 carries the phosphoserine; by CDK1 modification. Residues Gly-659 to Tyr-782 enclose the C2 domain. The interval Leu-822–Pro-949 is disordered. Residues Glu-836–Val-1104 are interaction with histone H3. The span at Tyr-841–Val-862 shows a compositional bias: acidic residues. Residues Ser-887, Ser-891, and Ser-919 each carry the phosphoserine modification. Positions Ile-916 to Tyr-930 are enriched in polar residues. The residue at position 921 (Thr-921) is a Phosphothreonine. Residue Ser-923 is modified to Phosphoserine; by CDK1. Ser-939 bears the Phosphoserine mark. Interaction with PRKCZ stretches follow at residues Ser-945–Gln-988 and Pro-948–Ser-967. Phosphoserine; by PKC/PRKCZ is present on residues Ser-967 and Ser-970. Positions His-994–Gln-1024 form a coiled coil. Positions Asp-1102–Val-1104 match the ADDV motif motif.

The protein belongs to the WWC family. KIBRA subfamily. In terms of assembly, homodimer. Forms heterodimers with WWC2 and WWC3. Interacts with DDN. Interacts with DYNLL1 and histone H3. The interaction with DYNLL1 is mandatory for the recruitment and transactivation functions of ESR1 or DYNLL1 to the target chromatin and the interaction with histone H3 ensures proper regulatory interaction of WWC1-DYNLL1-ESR1 complexes with target chromatin. Interacts (via WW domains) with DDR1 (via PPxY motif) in a collagen-regulated manner. Interacts with PRKCZ (via the protein kinase domain). Forms a tripartite complex with DDR1 and PRKCZ, but predominantly in the absence of collagen. Interacts (via the ADDV motif) with PATJ (via PDZ domain 8). Interacts (via WW domains) with SYNPO (via PPxY motifs). Interacts with NF2 and SNX4. Interacts with CCDC141; retains AMPAR in the cytosol after internalization. Interacts with DLC1 and PRKCZ. Interacts (via WW domains) with LATS1 and LATS2. In terms of processing, phosphorylation at Ser-542 and Ser-923 by CDK1 in response to spindle damage stress regulates mitotic exit, these two sites are dephosphorylated by CDC14B. Mammary epithelium.

It is found in the cytoplasm. Its subcellular location is the perinuclear region. It localises to the nucleus. The protein localises to the cell projection. The protein resides in the ruffle membrane. It is found in the cytosol. Regulator of the Hippo signaling pathway, also known as the Salvador-Warts-Hippo (SWH) pathway. Enhances phosphorylation of LATS1 and YAP1 and negatively regulates cell proliferation and organ growth due to a suppression of the transcriptional activity of YAP1, the major effector of the Hippo pathway. Along with NF2 can synergistically induce the phosphorylation of LATS1 and LATS2 and function in the regulation of Hippo signaling pathway. Acts as a transcriptional coactivator of ESR1 which plays an essential role in DYNLL1-mediated ESR1 transactivation. Modulates directional migration of podocytes. May be associated with memory performance. Regulates collagen-stimulated activation of the ERK/MAPK cascade. Plays an important role in regulating AMPA-selective glutamate receptors (AMPARs) trafficking. The protein is Protein KIBRA (Wwc1) of Mus musculus (Mouse).